Reading from the N-terminus, the 348-residue chain is Transmembrane protease serine 12 (348 aa).

The first 20 residues, 1–20 (MRLGLLSVALLFVGSSHLYS), serve as a signal peptide directing secretion. Over 21 to 324 (DHYSPSGRHR…EHFFHASTQG (304 aa)) the chain is Extracellular. The segment at 24–46 (SPSGRHRLGPSPEPAASSQQAEA) is disordered. In terms of domain architecture, Peptidase S1 spans 78–318 (IIGGTEAQAG…YQKWLTEHFF (241 aa)). Cysteines 107 and 123 form a disulfide. Residues H122 and D171 each act as charge relay system in the active site. 3 disulfide bridges follow: C206–C274, C237–C253, and C264–C294. Residues N219 and N249 are each glycosylated (N-linked (GlcNAc...) asparagine). S268 serves as the catalytic Charge relay system. A helical membrane pass occupies residues 325–345 (ILTINILRGQILIALCFVILL). The Cytoplasmic portion of the chain corresponds to 346-348 (ATT).

It belongs to the peptidase S1 family. In testis, expressed in spermatocytes and spermatids (at protein level).

It localises to the cell membrane. The protein localises to the cytoplasmic vesicle. Its subcellular location is the secretory vesicle. The protein resides in the acrosome. Functionally, required for male fertility. Plays a critical role in sperm capacitation and acrosome reactions during fertilization, and also plays a role in the regulation of proteins involved in spermatogenesis. Regulates protein pathways that promote chromosomal synapsis formation, double-strand break repair, formation of the inner mitochondrial membrane cristae and apoptosis in developing sperm. Required for normal sperm motility and binding to the zona pellucida, potentially via a role in ADAM3 protein maturation. The chain is Transmembrane protease serine 12 from Homo sapiens (Human).